The chain runs to 501 residues: ATP synthase subunit alpha (501 aa).

Residue G169 to T176 participates in ATP binding.

Belongs to the ATPase alpha/beta chains family. In terms of assembly, F-type ATPases have 2 components, CF(1) - the catalytic core - and CF(0) - the membrane proton channel. CF(1) has five subunits: alpha(3), beta(3), gamma(1), delta(1), epsilon(1). CF(0) has three main subunits: a(1), b(2) and c(9-12). The alpha and beta chains form an alternating ring which encloses part of the gamma chain. CF(1) is attached to CF(0) by a central stalk formed by the gamma and epsilon chains, while a peripheral stalk is formed by the delta and b chains.

It localises to the cell inner membrane. It catalyses the reaction ATP + H2O + 4 H(+)(in) = ADP + phosphate + 5 H(+)(out). In terms of biological role, produces ATP from ADP in the presence of a proton gradient across the membrane. The alpha chain is a regulatory subunit. The protein is ATP synthase subunit alpha of Campylobacter jejuni subsp. doylei (strain ATCC BAA-1458 / RM4099 / 269.97).